A 394-amino-acid chain; its full sequence is Ceramide glucosyltransferase (394 aa).

Residues 1–10 are Lumenal-facing; the sequence is MAVLDLALQG. The helical transmembrane segment at 11-32 threads the bilayer; the sequence is LAIFGCVLFFVLWFMHFLSIVY. The Cytoplasmic segment spans residues 33–195; it reads TRLHLNKKVS…QVYFGTSHPR (163 aa). Asp92 is a short sequence motif (D1). Residue Asp144 is a short sequence motif, D2. Residues 196–215 traverse the membrane as a helical segment; that stretch reads SYISANVTGFKCVTGMSCLM. Residues 216–287 are Lumenal-facing; sequence RKEVLDQAGG…KLRINMLPAT (72 aa). Residue Asp236 is a short sequence motif, D3. Residue Asp236 is the Proton acceptor of the active site. Positions 272–276 match the (Q/R)XXRW motif; the sequence is RMIRW. The chain crosses the membrane as a helical span at residues 288–304; it reads IICEPISECFVASLIIG. Residues 305–309 are Cytoplasmic-facing; that stretch reads WAAHH. Residues 310–328 form a helical membrane-spanning segment; the sequence is IFRWDIMVFFMCHCLAWFI. Over 329–348 the chain is Lumenal; the sequence is FDYIQLRGVQGGPLNFSKLD. Residues 349–369 form a helical membrane-spanning segment; that stretch reads YAVAWFIRESMTIYIFLSALW. The Cytoplasmic portion of the chain corresponds to 370–394; the sequence is DPTISWRTGRYRLRCGGTAEEILDV.

Belongs to the glycosyltransferase 2 family.

Its subcellular location is the golgi apparatus membrane. The catalysed reaction is an N-acylsphing-4-enine + UDP-alpha-D-glucose = a beta-D-glucosyl-(1&lt;-&gt;1')-N-acylsphing-4-enine + UDP + H(+). It catalyses the reaction UDP-alpha-D-xylose + an N-acylsphing-4-enine = a beta-D-xylosyl-(1&lt;-&gt;1')-N-acylsphing-4-enine + UDP + H(+). The enzyme catalyses N-(9Z-octadecenoyl)-sphing-4-enine + UDP-alpha-D-xylose = beta-D-xylosyl-(1&lt;-&gt;1')-N-(9Z-octadecenoyl)-sphing-4-enine + UDP + H(+). It participates in lipid metabolism; sphingolipid metabolism. Functionally, participates in the initial step of the glucosylceramide-based glycosphingolipid/GSL synthetic pathway at the cytosolic surface of the Golgi. Catalyzes the transfer of glucose from UDP-glucose to ceramide to produce glucosylceramide/GlcCer (such as beta-D-glucosyl-(1&lt;-&gt;1')-N-acylsphing-4-enine). Glucosylceramide is the core component of glycosphingolipids/GSLs, amphipathic molecules consisting of a ceramide lipid moiety embedded in the outer leaflet of the membrane, linked to one of hundreds of different externally oriented oligosaccharide structures. Glycosphingolipids are essential components of membrane microdomains that mediate membrane trafficking and signal transduction. They are implicated in many fundamental cellular processes, including growth, differentiation, migration, morphogenesis, cell-to-cell and cell-to-matrix interactions. Catalyzes the synthesis of xylosylceramide/XylCer (such as beta-D-xylosyl-(1&lt;-&gt;1')-N-acylsphing-4-enine) using UDP-Xyl as xylose donor. This Xenopus tropicalis (Western clawed frog) protein is Ceramide glucosyltransferase (ugcg).